Here is a 317-residue protein sequence, read N- to C-terminus: Peroxidase 64 (317 aa).

The signal sequence occupies residues 1 to 22 (MNAHMLNLLVIVIFVVSFDVQA). 4 disulfides stabilise this stretch: C32–C111, C65–C70, C117–C313, and C195–C227. The active-site Proton acceptor is the H63. Residues D64, V67, G69, D71, and S73 each contribute to the Ca(2+) site. P158 contributes to the substrate binding site. N163 is a glycosylation site (N-linked (GlcNAc...) asparagine). Heme b is bound at residue H188. Residue T189 coordinates Ca(2+). Ca(2+) contacts are provided by D241, T243, and D248.

It belongs to the peroxidase family. Classical plant (class III) peroxidase subfamily. Heme b serves as cofactor. The cofactor is Ca(2+). Expressed in the whole plant, but preferentially in roots.

Its subcellular location is the secreted. It carries out the reaction 2 a phenolic donor + H2O2 = 2 a phenolic radical donor + 2 H2O. In terms of biological role, removal of H(2)O(2), oxidation of toxic reductants, biosynthesis and degradation of lignin, suberization, auxin catabolism, response to environmental stresses such as wounding, pathogen attack and oxidative stress. These functions might be dependent on each isozyme/isoform in each plant tissue. The protein is Peroxidase 64 (PER64) of Arabidopsis thaliana (Mouse-ear cress).